A 51-amino-acid chain; its full sequence is Large ribosomal subunit protein eL39 (51 aa).

The protein belongs to the eukaryotic ribosomal protein eL39 family.

In Pyrococcus abyssi (strain GE5 / Orsay), this protein is Large ribosomal subunit protein eL39 (rpl39e).